A 948-amino-acid polypeptide reads, in one-letter code: Putative JmjC domain-containing histone demethylation protein 1 (948 aa).

The JmjC domain occupies 243-402 (VSTTKLAYYV…PQLSIYNLEL (160 aa)). Substrate is bound at residue threonine 294. 2 residues coordinate Fe cation: histidine 297 and glutamate 299. Lysine 314 is a binding site for substrate.

The protein belongs to the JHDM1 histone demethylase family. It depends on Fe(2+) as a cofactor.

It is found in the nucleus. It catalyses the reaction N(6),N(6)-dimethyl-L-lysyl(36)-[histone H3] + 2 2-oxoglutarate + 2 O2 = L-lysyl(36)-[histone H3] + 2 formaldehyde + 2 succinate + 2 CO2. Functionally, may be a histone demethylase that specifically demethylates 'Lys-36' of histone H3, thereby playing a central role in histone code. Represses transcriptional silencing by negatively affecting heterochromatin stability. The polypeptide is Putative JmjC domain-containing histone demethylation protein 1 (jhd1) (Schizosaccharomyces pombe (strain 972 / ATCC 24843) (Fission yeast)).